A 366-amino-acid polypeptide reads, in one-letter code: Erythronate-4-phosphate dehydrogenase (366 aa).

Substrate-binding residues include Ser-46 and Thr-67. Residues Asp-147 and Thr-175 each coordinate NAD(+). Residue Arg-208 is part of the active site. Asp-228 serves as a coordination point for NAD(+). Residue Glu-233 is part of the active site. His-250 acts as the Proton donor in catalysis. NAD(+) is bound at residue Gly-253. A substrate-binding site is contributed by Tyr-254.

The protein belongs to the D-isomer specific 2-hydroxyacid dehydrogenase family. PdxB subfamily. As to quaternary structure, homodimer.

Its subcellular location is the cytoplasm. It catalyses the reaction 4-phospho-D-erythronate + NAD(+) = (R)-3-hydroxy-2-oxo-4-phosphooxybutanoate + NADH + H(+). Its pathway is cofactor biosynthesis; pyridoxine 5'-phosphate biosynthesis; pyridoxine 5'-phosphate from D-erythrose 4-phosphate: step 2/5. In terms of biological role, catalyzes the oxidation of erythronate-4-phosphate to 3-hydroxy-2-oxo-4-phosphonooxybutanoate. The chain is Erythronate-4-phosphate dehydrogenase from Coxiella burnetii (strain Dugway 5J108-111).